A 308-amino-acid polypeptide reads, in one-letter code: L-lactate dehydrogenase 2 (308 aa).

Residues Val-13, Asp-34, Arg-39, Tyr-64, and 78–79 (GV) each bind NAD(+). Arg-87 contributes to the substrate binding site. Position 100 (Thr-100) interacts with NAD(+). 119 to 122 (NPVD) is a binding site for substrate. Residue Thr-142 coordinates NAD(+). 147-150 (DSMR) provides a ligand contact to substrate. Residue His-174 is the Proton acceptor of the active site. Substrate is bound at residue Thr-224.

It belongs to the LDH/MDH superfamily. LDH family. In terms of assembly, homotetramer.

Its subcellular location is the cytoplasm. The catalysed reaction is (S)-lactate + NAD(+) = pyruvate + NADH + H(+). It functions in the pathway fermentation; pyruvate fermentation to lactate; (S)-lactate from pyruvate: step 1/1. Its function is as follows. Catalyzes the conversion of lactate to pyruvate. The protein is L-lactate dehydrogenase 2 of Lactobacillus acidophilus (strain ATCC 700396 / NCK56 / N2 / NCFM).